Here is a 205-residue protein sequence, read N- to C-terminus: Heat shock protein beta-11 (205 aa).

Residues 67-180 (VSPMTTFKPI…NERVIPITYT (114 aa)) enclose the sHSP domain. Positions 184 to 205 (KNPALQNSEPENQAVEAEAAEN) are disordered. The segment covering 192 to 205 (EPENQAVEAEAAEN) has biased composition (low complexity).

The protein belongs to the small heat shock protein (HSP20) family. Expressed specifically in the rostral-most somites at 24 hpf. At 48 hpf, expression continues in the rostral-most somites and also in the notochord. Somite expression was restricted to the vicinity of the horizontal myoseptum. In adults, expressed in the heart.

This chain is Heat shock protein beta-11 (hspb11), found in Danio rerio (Zebrafish).